Reading from the N-terminus, the 142-residue chain is Transcriptional regulator MraZ (142 aa).

2 consecutive SpoVT-AbrB domains span residues 5-47 and 76-119; these read EYNH…PMEE and ANEI…SREK.

The protein belongs to the MraZ family. As to quaternary structure, forms oligomers.

Its subcellular location is the cytoplasm. It is found in the nucleoid. The polypeptide is Transcriptional regulator MraZ (Clostridium tetani (strain Massachusetts / E88)).